Consider the following 611-residue polypeptide: Adenosylhomocysteinase 3 (611 aa).

Composition is skewed to low complexity over residues 1–14, 36–57, and 68–81; these read MSVQ…AAKV, AAVG…APAA, and GPAA…GKVP. A disordered region spans residues 1 to 184; the sequence is MSVQVVSAAA…KQQKNSKGSS (184 aa). Residue serine 2 is modified to N-acetylserine. An LISN domain, inhibits interaction with ITPR1 region spans residues 2–109; that stretch reads SVQVVSAAAA…DGGEALVSPD (108 aa). At serine 107 the chain carries Phosphoserine. Over residues 135 to 144 the composition is skewed to basic residues; it reads RPTKIGRRSL. Low complexity predominate over residues 145-164; sequence SRSISQSSTDSYSSAASYTD. Phosphoserine occurs at positions 149, 152, 155, and 158. Substrate contacts are provided by threonine 236, aspartate 310, and glutamate 335. 336–338 is an NAD(+) binding site; sequence SVT. 2 residues coordinate substrate: lysine 365 and aspartate 369. NAD(+) contacts are provided by residues asparagine 370, 401 to 406, glutamate 422, asparagine 457, 478 to 479, and asparagine 525; these read GEVGKG and MG.

It belongs to the adenosylhomocysteinase family. Homotetramer. Forms heteromultimers with AHCYL1 (via the C-terminal region). Interacts with ITPR1; with lower affinity than AHCYL1 and maybe via ITPR1. Interacts with SLC4A4. Interacts with ZCCHC4. It depends on NAD(+) as a cofactor. Post-translationally, phosphorylated during neuronal differentiation at the LISN domain.

The protein resides in the cytoplasm. It is found in the microsome. The catalysed reaction is S-adenosyl-L-homocysteine + H2O = L-homocysteine + adenosine. Its pathway is amino-acid biosynthesis; L-homocysteine biosynthesis; L-homocysteine from S-adenosyl-L-homocysteine: step 1/1. May regulate the electrogenic sodium/bicarbonate cotransporter SLC4A4 activity and Mg(2+)-sensitivity. On the contrary of its homolog AHCYL1, does not regulate ITPR1 sensitivity to inositol 1,4,5-trisphosphate. The chain is Adenosylhomocysteinase 3 (AHCYL2) from Homo sapiens (Human).